Here is a 345-residue protein sequence, read N- to C-terminus: AA9 family lytic polysaccharide monooxygenase D (345 aa).

The first 21 residues, methionine 1–alanine 21, serve as a signal peptide directing secretion. Residues histidine 22 and histidine 107 each contribute to the Cu(2+) site. Cysteine 77 and cysteine 200 are oxidised to a cystine. Asparagine 160 carries an N-linked (GlcNAc...) asparagine glycan. Positions 186 and 195 each coordinate O2. A Cu(2+)-binding site is contributed by tyrosine 197. A disordered region spans residues valine 315–alanine 345. Polar residues predominate over residues serine 318–glutamine 327. Basic residues predominate over residues glycine 335–alanine 345.

This sequence belongs to the polysaccharide monooxygenase AA9 family. The cofactor is Cu(2+).

The protein resides in the secreted. The catalysed reaction is [(1-&gt;4)-beta-D-glucosyl]n+m + reduced acceptor + O2 = 4-dehydro-beta-D-glucosyl-[(1-&gt;4)-beta-D-glucosyl]n-1 + [(1-&gt;4)-beta-D-glucosyl]m + acceptor + H2O.. Functionally, lytic polysaccharide monooxygenase (LPMO) that depolymerizes crystalline and amorphous polysaccharides via the oxidation of scissile alpha- or beta-(1-4)-glycosidic bonds, yielding C1 or C4 oxidation products. Catalysis by LPMOs requires the reduction of the active-site copper from Cu(II) to Cu(I) by a reducing agent and H(2)O(2) or O(2) as a cosubstrate. This chain is AA9 family lytic polysaccharide monooxygenase D, found in Podospora anserina (strain S / ATCC MYA-4624 / DSM 980 / FGSC 10383) (Pleurage anserina).